Consider the following 920-residue polypeptide: Nonribosomal peptide synthetase atrA (920 aa).

The interval 13–428 is adenylation (A) domain; that stretch reads AAAQERCGRV…AGRLKETMII (416 aa). The Carrier domain maps to 558 to 637; that stretch reads PPKDELERSL…ELSAALHDLQ (80 aa). S595 carries the post-translational modification O-(pantetheine 4'-phosphoryl)serine. The interval 656 to 905 is thioesterase (TE) domain; the sequence is PLWLIHPGVG…YTMLAPEHVF (250 aa).

It belongs to the NRP synthetase family.

It catalyses the reaction 2 3-(4-hydroxyphenyl)pyruvate + 2 ATP = atromentin + 2 AMP + 2 diphosphate + H(+). Nonribosomal peptide synthetase that mediates the biosynthesis of atromentin. AtrA first activates 4-hydroxyphenylpyruvate (HPPA) through its A domain to AMP-HPPA. The HPPA unit is then loaded to the T domain and eventually transferred to the TE domain. Another HPPA unit is then loaded onto the T domain. The TE domain then catalyzes the condensation of the two HPPA units and the release of atromentin via cyclization. In Aspergillus terreus (strain NIH 2624 / FGSC A1156), this protein is Nonribosomal peptide synthetase atrA.